A 212-amino-acid chain; its full sequence is Hydroxyacylglutathione hydrolase GloC (212 aa).

His-55, His-57, Asp-59, His-60, His-132, Asp-151, and His-192 together coordinate Zn(2+).

It belongs to the metallo-beta-lactamase superfamily. Glyoxalase II family. Zn(2+) serves as cofactor.

It carries out the reaction an S-(2-hydroxyacyl)glutathione + H2O = a 2-hydroxy carboxylate + glutathione + H(+). The catalysed reaction is (R)-S-lactoylglutathione + H2O = (R)-lactate + glutathione + H(+). Its pathway is secondary metabolite metabolism; methylglyoxal degradation; (R)-lactate from methylglyoxal: step 2/2. Functionally, type II glyoxalase, isozyme of GloB, that hydrolyzes (R)-S-lactoylglutathione to (R)-lactate and glutathione. Plays a role in methylglyoxal (MG) detoxification. This is Hydroxyacylglutathione hydrolase GloC from Haemophilus influenzae (strain ATCC 51907 / DSM 11121 / KW20 / Rd).